A 245-amino-acid polypeptide reads, in one-letter code: Probable transcriptional regulatory protein BF2589 (245 aa).

The tract at residues 225–245 (EDEDVQNVYTNMKPADNEGEE) is disordered.

It belongs to the TACO1 family.

It is found in the cytoplasm. This is Probable transcriptional regulatory protein BF2589 from Bacteroides fragilis (strain ATCC 25285 / DSM 2151 / CCUG 4856 / JCM 11019 / LMG 10263 / NCTC 9343 / Onslow / VPI 2553 / EN-2).